We begin with the raw amino-acid sequence, 232 residues long: 2,3,4,5-tetrahydropyridine-2,6-dicarboxylate N-acetyltransferase (232 aa).

Belongs to the transferase hexapeptide repeat family. DapH subfamily.

It carries out the reaction (S)-2,3,4,5-tetrahydrodipicolinate + acetyl-CoA + H2O = L-2-acetamido-6-oxoheptanedioate + CoA. The protein operates within amino-acid biosynthesis; L-lysine biosynthesis via DAP pathway; LL-2,6-diaminopimelate from (S)-tetrahydrodipicolinate (acetylase route): step 1/3. Its function is as follows. Catalyzes the transfer of an acetyl group from acetyl-CoA to tetrahydrodipicolinate. The sequence is that of 2,3,4,5-tetrahydropyridine-2,6-dicarboxylate N-acetyltransferase from Streptococcus mutans serotype c (strain ATCC 700610 / UA159).